A 287-amino-acid chain; its full sequence is NAD-dependent protein deacylase sir-2.2 (287 aa).

In terms of domain architecture, Deacetylase sirtuin-type spans 10–287; the sequence is AELCENSLKK…YKISDVLKEM (278 aa). NAD(+)-binding positions include 35 to 55 and 116 to 119; these read GAGI…VGLY and QNVD. His134 functions as the Proton acceptor in the catalytic mechanism. Zn(2+) is bound by residues Cys142, Cys145, Cys196, and Cys199. Residues 236-238, 262-264, and Ile280 contribute to the NAD(+) site; these read GTS and NIG.

Belongs to the sirtuin family. Class II subfamily. Interacts with pyc-1, pcca-1 and mccc-1. It depends on Zn(2+) as a cofactor. In terms of tissue distribution, ubiquitously expressed with high expression in the pharynx, body wall muscles and gonad.

The protein localises to the mitochondrion matrix. It localises to the mitochondrion. The enzyme catalyses N(6)-acetyl-L-lysyl-[protein] + NAD(+) + H2O = 2''-O-acetyl-ADP-D-ribose + nicotinamide + L-lysyl-[protein]. Functionally, NAD-dependent protein deacylase. Catalyzes the NAD-dependent hydrolysis of acyl groups from lysine residues. Plays a role in oxidative stress resistance. The protein is NAD-dependent protein deacylase sir-2.2 (sir-2.2) of Caenorhabditis elegans.